We begin with the raw amino-acid sequence, 120 residues long: MFYWILLALAIATEITGTLSMKWASVGNGNAGFILMLVMITLSYIFLSFAVKKIALGVAYALWEGIGILFITIFSVLLFDEALSTMKIAGLLTLVAGIVLIKSGTRKPGKPVKGAARATI.

The next 4 membrane-spanning stretches (helical) occupy residues 1-21, 31-51, 54-74, and 81-101; these read MFYW…TLSM, AGFI…SFAV, IALG…ITIF, and EALS…IVLI.

It belongs to the drug/metabolite transporter (DMT) superfamily. Small multidrug resistance (SMR) (TC 2.A.7.1) family. MdtJ subfamily. In terms of assembly, forms a complex with MdtI.

The protein localises to the cell inner membrane. In terms of biological role, catalyzes the excretion of spermidine. The protein is Spermidine export protein MdtJ of Salmonella paratyphi A (strain ATCC 9150 / SARB42).